The primary structure comprises 458 residues: Bifunctional protein GlmU (458 aa).

Residues 1–229 (MNKFAIVLAA…FDESLGVNDR (229 aa)) are pyrophosphorylase. Residues 8 to 11 (LAAG), K22, Q72, and 77 to 78 (GT) each bind UDP-N-acetyl-alpha-D-glucosamine. Residue D102 participates in Mg(2+) binding. UDP-N-acetyl-alpha-D-glucosamine is bound by residues G139, E154, N169, and N227. A Mg(2+)-binding site is contributed by N227. The interval 230 to 250 (VALSQAEGTMRKRINHEHMVN) is linker. The segment at 251–458 (GVTLIDPATT…AKKMPHYRGQ (208 aa)) is N-acetyltransferase. UDP-N-acetyl-alpha-D-glucosamine contacts are provided by R332 and K350. H362 (proton acceptor) is an active-site residue. The UDP-N-acetyl-alpha-D-glucosamine site is built by Y365 and N376. Residues A379, S404, A422, and R439 each contribute to the acetyl-CoA site.

In the N-terminal section; belongs to the N-acetylglucosamine-1-phosphate uridyltransferase family. It in the C-terminal section; belongs to the transferase hexapeptide repeat family. In terms of assembly, homotrimer. It depends on Mg(2+) as a cofactor.

It is found in the cytoplasm. It catalyses the reaction alpha-D-glucosamine 1-phosphate + acetyl-CoA = N-acetyl-alpha-D-glucosamine 1-phosphate + CoA + H(+). It carries out the reaction N-acetyl-alpha-D-glucosamine 1-phosphate + UTP + H(+) = UDP-N-acetyl-alpha-D-glucosamine + diphosphate. It participates in nucleotide-sugar biosynthesis; UDP-N-acetyl-alpha-D-glucosamine biosynthesis; N-acetyl-alpha-D-glucosamine 1-phosphate from alpha-D-glucosamine 6-phosphate (route II): step 2/2. The protein operates within nucleotide-sugar biosynthesis; UDP-N-acetyl-alpha-D-glucosamine biosynthesis; UDP-N-acetyl-alpha-D-glucosamine from N-acetyl-alpha-D-glucosamine 1-phosphate: step 1/1. It functions in the pathway bacterial outer membrane biogenesis; LPS lipid A biosynthesis. Functionally, catalyzes the last two sequential reactions in the de novo biosynthetic pathway for UDP-N-acetylglucosamine (UDP-GlcNAc). The C-terminal domain catalyzes the transfer of acetyl group from acetyl coenzyme A to glucosamine-1-phosphate (GlcN-1-P) to produce N-acetylglucosamine-1-phosphate (GlcNAc-1-P), which is converted into UDP-GlcNAc by the transfer of uridine 5-monophosphate (from uridine 5-triphosphate), a reaction catalyzed by the N-terminal domain. The sequence is that of Bifunctional protein GlmU from Lactococcus lactis subsp. cremoris (strain SK11).